The primary structure comprises 757 residues: RNA-directed RNA polymerase catalytic subunit (757 aa).

A disordered region spans residues 53–82 (GRWTTNTETGAPQLNPIDGPLPEDNEPSGY). Residues 55 to 64 (WTTNTETGAP) are compositionally biased toward polar residues. 2 short sequence motifs (nuclear localization signal) span residues 187–195 (RKRRVRDNM) and 203–216 (RTMGKKKQRLNKRS). A promoter-binding site region spans residues 249-256 (RGFVYFVE). Residues 286 to 483 (VRKMMTNSQD…GINMSKKKSY (198 aa)) form the RdRp catalytic domain.

The protein belongs to the influenza viruses polymerase PB1 family. In terms of assembly, influenza RNA polymerase is composed of three subunits: PB1, PB2 and PA. Interacts (via N-terminus) with PA (via C-terminus). Interacts (via C-terminus) with PB2 (via N-terminus); this interaction is essential for transcription initiation. In terms of processing, phosphorylated by host PRKCA.

Its subcellular location is the host nucleus. The protein localises to the host cytoplasm. The catalysed reaction is RNA(n) + a ribonucleoside 5'-triphosphate = RNA(n+1) + diphosphate. Its function is as follows. RNA-dependent RNA polymerase which is responsible for replication and transcription of virus RNA segments. The transcription of viral mRNAs occurs by a unique mechanism called cap-snatching. 5' methylated caps of cellular mRNAs are cleaved after 10-13 nucleotides by PA. In turn, these short capped RNAs are used as primers by PB1 for transcription of viral mRNAs. During virus replication, PB1 initiates RNA synthesis and copy vRNA into complementary RNA (cRNA) which in turn serves as a template for the production of more vRNAs. This chain is RNA-directed RNA polymerase catalytic subunit, found in Aves (whales).